The sequence spans 123 residues: Glycophorin-B (123 aa).

The first 19 residues, 1 to 19, serve as a signal peptide directing secretion; that stretch reads MYGKIIFVLLLSEIVSISA. A helical membrane pass occupies residues 93–113; that stretch reads VVIILIILCVMAGVIGTILLI.

The protein belongs to the glycophorin-A family. As to quaternary structure, component of the ankyrin-1 complex in the erythrocyte, composed of ANK1, RHCE, RHAG, SLC4A1, EPB42, GYPA, GYPB and AQP1. Interacts (via the N-terminal) with RHAG; this interaction bridges the (RHAG)2(RHCE) heterotrimer with the SLC4A1 Band 3 I dimer complexed with GYPA. Post-translationally, the N-terminal extracellular domain is heavily glycosylated on serine and threonine residues.

It localises to the cell membrane. In terms of biological role, component of the ankyrin-1 complex, a multiprotein complex involved in the stability and shape of the erythrocyte membrane. In Pan troglodytes (Chimpanzee), this protein is Glycophorin-B.